Reading from the N-terminus, the 343-residue chain is Phosphoribosylformylglycinamidine cyclo-ligase (343 aa).

It belongs to the AIR synthase family.

It localises to the cytoplasm. It catalyses the reaction 2-formamido-N(1)-(5-O-phospho-beta-D-ribosyl)acetamidine + ATP = 5-amino-1-(5-phospho-beta-D-ribosyl)imidazole + ADP + phosphate + H(+). The protein operates within purine metabolism; IMP biosynthesis via de novo pathway; 5-amino-1-(5-phospho-D-ribosyl)imidazole from N(2)-formyl-N(1)-(5-phospho-D-ribosyl)glycinamide: step 2/2. The protein is Phosphoribosylformylglycinamidine cyclo-ligase of Carboxydothermus hydrogenoformans (strain ATCC BAA-161 / DSM 6008 / Z-2901).